The primary structure comprises 211 residues: ATP phosphoribosyltransferase (211 aa).

It belongs to the ATP phosphoribosyltransferase family. Short subfamily. As to quaternary structure, heteromultimer composed of HisG and HisZ subunits.

The protein localises to the cytoplasm. It carries out the reaction 1-(5-phospho-beta-D-ribosyl)-ATP + diphosphate = 5-phospho-alpha-D-ribose 1-diphosphate + ATP. The protein operates within amino-acid biosynthesis; L-histidine biosynthesis; L-histidine from 5-phospho-alpha-D-ribose 1-diphosphate: step 1/9. In terms of biological role, catalyzes the condensation of ATP and 5-phosphoribose 1-diphosphate to form N'-(5'-phosphoribosyl)-ATP (PR-ATP). Has a crucial role in the pathway because the rate of histidine biosynthesis seems to be controlled primarily by regulation of HisG enzymatic activity. The polypeptide is ATP phosphoribosyltransferase (Ectopseudomonas mendocina (strain ymp) (Pseudomonas mendocina)).